Consider the following 714-residue polypeptide: Calpain-1 catalytic subunit (714 aa).

The Calpain catalytic domain occupies 55 to 354 (LFRDEAFPPV…FTRLEICNLT (300 aa)). Residues Q109 and D114 each contribute to the Ca(2+) site. Residues C115, H272, and N296 contribute to the active site. The Ca(2+) site is built by S316, D318, and E323. T354 is subject to Phosphothreonine. A domain III region spans residues 355-526 (PDALKSRTIR…KSAGTAELDD (172 aa)). Residues 527-542 (QIQANLPDEQVLSEEE) are linker. 4 consecutive EF-hand domains span residues 541–576 (EEIDENFKALFRQLAGEDMEISVKELRTILNRIISK), 585–618 (FSLESCRSMVNLMDRDGNGKLGLVEFNILWNRIR), 615–650 (NRIRNYLSIFRKFDLDKSGSMSAYEMRMAIESAGFK), and 680–714 (VRLETMFRFFKTLDTDLDGVVTFDLFKWLQLTMFA). Residues 543–713 (IDENFKALFR…LFKWLQLTMF (171 aa)) are domain IV. The Ca(2+) site is built by D598, D600, N602, K604, E609, D628, D630, S632, S634, and E639.

This sequence belongs to the peptidase C2 family. In terms of assembly, forms a heterodimer with a small (regulatory) subunit (CAPNS1). Ca(2+) is required as a cofactor. Undergoes calcium-induced successive autoproteolytic cleavages that generate a membrane-bound 78 kDa active form and an intracellular 75 kDa active form. Calpastatin reduces with high efficiency the transition from 78 kDa to 75 kDa calpain forms. In terms of tissue distribution, ubiquitous.

The protein localises to the cytoplasm. The protein resides in the cell membrane. The enzyme catalyses Broad endopeptidase specificity.. With respect to regulation, activated by micromolar concentrations of calcium and inhibited by calpastatin. In terms of biological role, calcium-regulated non-lysosomal thiol-protease which catalyze limited proteolysis of substrates involved in cytoskeletal remodeling and signal transduction. Proteolytically cleaves CTBP1. Cleaves and activates caspase-7 (CASP7). This chain is Calpain-1 catalytic subunit (CAPN1), found in Macaca fascicularis (Crab-eating macaque).